The chain runs to 408 residues: Ribonuclease T2-like (408 aa).

An N-terminal signal peptide occupies residues 1–25 (MLQSIPGPQHILKALTGSLGLSTIF). 4 cysteine pairs are disulfide-bonded: Cys38-Cys56, Cys45-Cys92, Cys55-Cys158, and Cys100-Cys150. His85 is an active-site residue. A glycan (N-linked (GlcNAc...) asparagine) is linked at Asn108. Catalysis depends on residues Glu143 and His147. N-linked (GlcNAc...) asparagine glycosylation occurs at Asn173. A disulfide bridge links Cys222 with Cys257. Positions 268–292 (KHREPSRTTDTPSQPTTTGTPFKGR) are disordered. The segment covering 275–288 (TTDTPSQPTTTGTP) has biased composition (low complexity). Asn372 is a glycosylation site (N-linked (GlcNAc...) asparagine).

Belongs to the RNase T2 family.

It is found in the vacuole lumen. The protein localises to the cytoplasm. The enzyme catalyses a ribonucleotidyl-ribonucleotide-RNA + H2O = a 3'-end 3'-phospho-ribonucleotide-RNA + a 5'-end dephospho-ribonucleoside-RNA + H(+). Rnase which modulates cell survival under stress conditions. Released from the vacuole to the cytoplasm during stress to promote tRNA and rRNA cleavage and to activate separately a downstream pathway that promotes cell death. Involved in cell size, vacuolar morphology and growth at high temperatures and high salt concentration. This is Ribonuclease T2-like (rny1) from Aspergillus fumigatus (strain ATCC MYA-4609 / CBS 101355 / FGSC A1100 / Af293) (Neosartorya fumigata).